The sequence spans 239 residues: Small ribosomal subunit protein uS2 (239 aa).

The protein belongs to the universal ribosomal protein uS2 family.

The protein is Small ribosomal subunit protein uS2 of Francisella tularensis subsp. holarctica (strain FTNF002-00 / FTA).